The chain runs to 254 residues: Imidazole glycerol phosphate synthase subunit HisF (254 aa).

Catalysis depends on residues aspartate 12 and aspartate 131.

It belongs to the HisA/HisF family. As to quaternary structure, heterodimer of HisH and HisF.

The protein resides in the cytoplasm. It carries out the reaction 5-[(5-phospho-1-deoxy-D-ribulos-1-ylimino)methylamino]-1-(5-phospho-beta-D-ribosyl)imidazole-4-carboxamide + L-glutamine = D-erythro-1-(imidazol-4-yl)glycerol 3-phosphate + 5-amino-1-(5-phospho-beta-D-ribosyl)imidazole-4-carboxamide + L-glutamate + H(+). Its pathway is amino-acid biosynthesis; L-histidine biosynthesis; L-histidine from 5-phospho-alpha-D-ribose 1-diphosphate: step 5/9. Functionally, IGPS catalyzes the conversion of PRFAR and glutamine to IGP, AICAR and glutamate. The HisF subunit catalyzes the cyclization activity that produces IGP and AICAR from PRFAR using the ammonia provided by the HisH subunit. The sequence is that of Imidazole glycerol phosphate synthase subunit HisF from Rhizorhabdus wittichii (strain DSM 6014 / CCUG 31198 / JCM 15750 / NBRC 105917 / EY 4224 / RW1) (Sphingomonas wittichii).